The sequence spans 166 residues: ATP synthase subunit b (166 aa).

The helical transmembrane segment at 15–37 (TLYYLLIFAALLLLVKHFAWGPV) threads the bilayer.

The protein belongs to the ATPase B chain family. In terms of assembly, F-type ATPases have 2 components, F(1) - the catalytic core - and F(0) - the membrane proton channel. F(1) has five subunits: alpha(3), beta(3), gamma(1), delta(1), epsilon(1). F(0) has three main subunits: a(1), b(2) and c(10-14). The alpha and beta chains form an alternating ring which encloses part of the gamma chain. F(1) is attached to F(0) by a central stalk formed by the gamma and epsilon chains, while a peripheral stalk is formed by the delta and b chains.

Its subcellular location is the cell membrane. F(1)F(0) ATP synthase produces ATP from ADP in the presence of a proton or sodium gradient. F-type ATPases consist of two structural domains, F(1) containing the extramembraneous catalytic core and F(0) containing the membrane proton channel, linked together by a central stalk and a peripheral stalk. During catalysis, ATP synthesis in the catalytic domain of F(1) is coupled via a rotary mechanism of the central stalk subunits to proton translocation. Its function is as follows. Component of the F(0) channel, it forms part of the peripheral stalk, linking F(1) to F(0). The polypeptide is ATP synthase subunit b (Lactobacillus gasseri (strain ATCC 33323 / DSM 20243 / BCRC 14619 / CIP 102991 / JCM 1131 / KCTC 3163 / NCIMB 11718 / NCTC 13722 / AM63)).